Reading from the N-terminus, the 317-residue chain is Pseudouridine-5'-phosphate glycosidase (317 aa).

The Proton donor role is filled by E27. K89 and V109 together coordinate substrate. D141 lines the Mn(2+) pocket. 143 to 145 (SAD) contributes to the substrate binding site. K162 acts as the Nucleophile in catalysis.

The protein belongs to the pseudouridine-5'-phosphate glycosidase family. In terms of assembly, homotrimer. Requires Mn(2+) as cofactor.

It carries out the reaction D-ribose 5-phosphate + uracil = psi-UMP + H2O. Functionally, catalyzes the reversible cleavage of pseudouridine 5'-phosphate (PsiMP) to ribose 5-phosphate and uracil. Functions biologically in the cleavage direction, as part of a pseudouridine degradation pathway. The chain is Pseudouridine-5'-phosphate glycosidase from Sorangium cellulosum (strain So ce56) (Polyangium cellulosum (strain So ce56)).